The chain runs to 86 residues: Large ribosomal subunit protein bL27 (86 aa).

The tract at residues 1 to 31 is disordered; the sequence is MAHKKAGGSSRNGRDSAGQRRGVKKFGGEPV.

It belongs to the bacterial ribosomal protein bL27 family.

This chain is Large ribosomal subunit protein bL27, found in Desulfotalea psychrophila (strain LSv54 / DSM 12343).